Consider the following 670-residue polypeptide: Protein-glutamine gamma-glutamyltransferase 4 (670 aa).

N-linked (GlcNAc...) asparagine glycans are attached at residues Asn-151 and Asn-219. Cys-255 is a catalytic residue. Residue Asn-288 is glycosylated (N-linked (GlcNAc...) asparagine). Active-site residues include His-314 and Asp-337. Residues Asn-377, Asp-379, Glu-429, and Glu-434 each coordinate Ca(2+). N-linked (GlcNAc...) asparagine glycans are attached at residues Asn-456 and Asn-491.

It belongs to the transglutaminase superfamily. Transglutaminase family. As to quaternary structure, homodimer. Requires Ca(2+) as cofactor. In terms of tissue distribution, expressed in the coagulating gland and in the dorsal part of the prostate. Not expressed in the brain, heart, kidney, liver, lung, muscle, pancreas, spleen, stomach, testis and thymus.

The protein localises to the secreted. The enzyme catalyses L-glutaminyl-[protein] + L-lysyl-[protein] = [protein]-L-lysyl-N(6)-5-L-glutamyl-[protein] + NH4(+). Associated with the mammalian reproductive process. Plays an important role in the formation of the seminal coagulum through the cross-linking of specific proteins present in the seminal plasma. Transglutaminase is also required to stabilize the copulatory plug. This chain is Protein-glutamine gamma-glutamyltransferase 4, found in Mus musculus (Mouse).